Consider the following 309-residue polypeptide: MNLMDITKIFSLLQPDKEEEDTDTEEKQALNQAVYDNDSYTLDQLLRQERYKRFINSRSGWGVPGTPLRLAASYGHLSCLQVLLAHGADVDSLDVKAQTPLFTAVSHGHLDCVRVLLEAGASPGGSIYNNCSPVLTAARDGAVAILQELLDHGAEANVKAKLPVWASNIASCSGPLYLAAVYGHLDCFRLLLLHGADPDYNCTDQGLLARVPRPRTLLEICLHHNCEPEYIQLLIDFGANIYLPSLSLDLTSQDDKGIALLLQARATPRSLLSQVRLVVRRALCQAGQPQAINQLDIPPMLISYLKHQL.

ANK repeat units lie at residues Val-63 to Ser-92, Lys-96 to Gly-125, Asn-129 to Val-158, Ser-171 to Tyr-200, and Arg-213 to Leu-243. Residues Pro-268–Gln-308 enclose the SOCS box domain.

Belongs to the ankyrin SOCS box (ASB) family. Interacts with CUL5 and RNF7.

The protein operates within protein modification; protein ubiquitination. Functionally, probable substrate-recognition component of a SCF-like ECS (Elongin-Cullin-SOCS-box protein) E3 ubiquitin-protein ligase complex which mediates the ubiquitination and subsequent proteasomal degradation of target proteins. The sequence is that of Ankyrin repeat and SOCS box protein 12 (ASB12) from Homo sapiens (Human).